The chain runs to 230 residues: Voltage-gated hydrogen channel 1 (230 aa).

Residues 1 to 58 (MAGCLRHFTSVGDDTKKKAWKEEDVEVAHEEEPKNTPHPFIASYSFRGALKWLFSSHK) lie on the Cytoplasmic side of the membrane. The chain crosses the membrane as a helical span at residues 59-79 (FQIVIICLVILDALFVLVEVL). The Extracellular portion of the chain corresponds to 80–96 (LDLELLAEKVDHIIPEI). Residues 97–119 (FHYLSISVLSFFILEIAGKLYAF) traverse the membrane as a helical segment. The Cytoplasmic portion of the chain corresponds to 120-127 (RLEFFHHK). A helical transmembrane segment spans residues 128–148 (FEVFDAAIVVISFIIDIVYIS). Residues 149–155 (REDIFNA) are Extracellular-facing. A helical membrane pass occupies residues 156-176 (VGLLILLRLWRVARIVNGIIV). The stretch at 177-226 (SVKTQAEDKIHRLKENQESLLEKVAHLEQQCAQQEQEIVRLQTLLQQHNV) forms a coiled coil. Residues 177–230 (SVKTQAEDKIHRLKENQESLLEKVAHLEQQCAQQEQEIVRLQTLLQQHNVFPAS) are Cytoplasmic-facing.

It belongs to the hydrogen channel family. In terms of assembly, homodimer.

It is found in the membrane. Its subcellular location is the cell membrane. In terms of biological role, mediates the voltage-dependent proton permeability of excitable membranes. Forms a proton-selective channel through which protons may pass in accordance with their electrochemical gradient. This is Voltage-gated hydrogen channel 1 (hvcn1) from Xenopus tropicalis (Western clawed frog).